A 255-amino-acid chain; its full sequence is Post-GPI attachment to proteins factor 2 (255 aa).

6 consecutive transmembrane segments (helical) span residues 25–45 (LAAL…SLLF), 80–100 (LAIF…LEYY), 111–131 (LGIL…CLSF), 143–163 (NAFV…YLLN), 185–205 (LFLV…RHNA), and 209–229 (AGVY…NMGF).

Belongs to the PGAP2 family.

It localises to the golgi apparatus membrane. The protein localises to the endoplasmic reticulum membrane. Involved in the lipid remodeling steps of GPI-anchor maturation. Required for stable expression of GPI-anchored proteins at the cell surface. This is Post-GPI attachment to proteins factor 2 from Drosophila pseudoobscura pseudoobscura (Fruit fly).